Here is a 185-residue protein sequence, read N- to C-terminus: Putative manganese efflux pump MntP (185 aa).

6 consecutive transmembrane segments (helical) span residues 6 to 26 (IFII…ACGL), 41 to 61 (FHFG…GLTV), 65 to 85 (VETY…GKMI), 107 to 127 (LVFL…SFSI), 132 to 152 (IAFP…FGLW), and 164 to 184 (SHIA…KLLL).

Belongs to the MntP (TC 9.B.29) family.

Its subcellular location is the cell inner membrane. Its function is as follows. Probably functions as a manganese efflux pump. The protein is Putative manganese efflux pump MntP of Maridesulfovibrio salexigens (strain ATCC 14822 / DSM 2638 / NCIMB 8403 / VKM B-1763) (Desulfovibrio salexigens).